The sequence spans 260 residues: Putative imidazole glycerol phosphate synthase subunit hisF3 (260 aa).

Residue Asp135 is part of the active site.

Belongs to the HisA/HisF family. In terms of assembly, heterodimer of HisH and HisF.

The protein localises to the cytoplasm. It carries out the reaction 5-[(5-phospho-1-deoxy-D-ribulos-1-ylimino)methylamino]-1-(5-phospho-beta-D-ribosyl)imidazole-4-carboxamide + L-glutamine = D-erythro-1-(imidazol-4-yl)glycerol 3-phosphate + 5-amino-1-(5-phospho-beta-D-ribosyl)imidazole-4-carboxamide + L-glutamate + H(+). The protein operates within amino-acid biosynthesis; L-histidine biosynthesis; L-histidine from 5-phospho-alpha-D-ribose 1-diphosphate: step 5/9. IGPS catalyzes the conversion of PRFAR and glutamine to IGP, AICAR and glutamate. The HisF subunit catalyzes the cyclization activity that produces IGP and AICAR from PRFAR using the ammonia provided by the HisH subunit. The chain is Putative imidazole glycerol phosphate synthase subunit hisF3 (hisF3) from Vibrio vulnificus (strain YJ016).